The primary structure comprises 133 residues: Aspartate 1-decarboxylase (133 aa).

Ser26 serves as the catalytic Schiff-base intermediate with substrate; via pyruvic acid. Ser26 is modified (pyruvic acid (Ser)). Residue Thr58 coordinates substrate. The active-site Proton donor is the Tyr59. 74–76 is a substrate binding site; the sequence is GAA.

Belongs to the PanD family. In terms of assembly, heterooctamer of four alpha and four beta subunits. Pyruvate is required as a cofactor. In terms of processing, is synthesized initially as an inactive proenzyme, which is activated by self-cleavage at a specific serine bond to produce a beta-subunit with a hydroxyl group at its C-terminus and an alpha-subunit with a pyruvoyl group at its N-terminus.

It localises to the cytoplasm. The enzyme catalyses L-aspartate + H(+) = beta-alanine + CO2. It participates in cofactor biosynthesis; (R)-pantothenate biosynthesis; beta-alanine from L-aspartate: step 1/1. Functionally, catalyzes the pyruvoyl-dependent decarboxylation of aspartate to produce beta-alanine. This chain is Aspartate 1-decarboxylase, found in Legionella pneumophila (strain Paris).